A 428-amino-acid polypeptide reads, in one-letter code: Histidine--tRNA ligase (428 aa).

This sequence belongs to the class-II aminoacyl-tRNA synthetase family. Homodimer.

The protein resides in the cytoplasm. It carries out the reaction tRNA(His) + L-histidine + ATP = L-histidyl-tRNA(His) + AMP + diphosphate + H(+). This Mesomycoplasma hyopneumoniae (strain 232) (Mycoplasma hyopneumoniae) protein is Histidine--tRNA ligase.